The chain runs to 365 residues: DNA replication and repair protein RecF (365 aa).

An ATP-binding site is contributed by 30–37 (GPNGSGKT).

It belongs to the RecF family.

Its subcellular location is the cytoplasm. In terms of biological role, the RecF protein is involved in DNA metabolism; it is required for DNA replication and normal SOS inducibility. RecF binds preferentially to single-stranded, linear DNA. It also seems to bind ATP. The chain is DNA replication and repair protein RecF from Azotobacter vinelandii (strain DJ / ATCC BAA-1303).